The chain runs to 141 residues: Large ribosomal subunit protein uL13 (141 aa).

This sequence belongs to the universal ribosomal protein uL13 family. As to quaternary structure, part of the 50S ribosomal subunit.

This protein is one of the early assembly proteins of the 50S ribosomal subunit, although it is not seen to bind rRNA by itself. It is important during the early stages of 50S assembly. The polypeptide is Large ribosomal subunit protein uL13 (Helicobacter acinonychis (strain Sheeba)).